We begin with the raw amino-acid sequence, 354 residues long: Rhodopsin (354 aa).

Residues 1 to 36 (MNGTEGPAFYVPMSNATGVVRSPYEYPQYYLVAPWA) lie on the Extracellular side of the membrane. Residues asparagine 2 and asparagine 15 are each glycosylated (N-linked (GlcNAc...) asparagine). Residues 37–61 (YGLLAAYMFFLIITGFPVNFLTLYV) traverse the membrane as a helical segment. Residues 62–73 (TIEHKKLRTPLN) lie on the Cytoplasmic side of the membrane. Residues 74–96 (YILLNLAIADLFMVFGGFTTTMY) form a helical membrane-spanning segment. Over 97–110 (TSLHGYFVFGRLGC) the chain is Extracellular. Cysteine 110 and cysteine 187 are oxidised to a cystine. A helical membrane pass occupies residues 111–133 (NLEGFFATLGGEMGLWSLVVLAI). The short motif at 134–136 (ERW) is the 'Ionic lock' involved in activated form stabilization element. Over 134–152 (ERWMVVCKPVSNFRFGENH) the chain is Cytoplasmic. Residues 153–173 (AIMGVAFTWVMACSCAVPPLV) traverse the membrane as a helical segment. Residues 174 to 202 (GWSRYIPEGMQCSCGVDYYTRTPGVNNES) are Extracellular-facing. Asparagine 200 is a glycosylation site (N-linked (GlcNAc...) asparagine). A helical transmembrane segment spans residues 203-224 (FVIYMFIVHFFIPLIVIFFCYG). The Cytoplasmic segment spans residues 225-252 (RLVCTVKEAAAQQQESETTQRAEREVTR). The chain crosses the membrane as a helical span at residues 253-274 (MVIIMVIAFLICWLPYAGVAWY). Residues 275 to 286 (IFTHQGSEFGPV) lie on the Extracellular side of the membrane. The helical transmembrane segment at 287–308 (FMTLPAFFAKTSAVYNPCIYIC) threads the bilayer. Residue lysine 296 is modified to N6-(retinylidene)lysine. At 309–354 (MNKQFRHCMITTLCCGKNPFEEEEGASTTASKTEASSVSSSSVSPA) the chain is on the cytoplasmic side. Residues 333 to 354 (GASTTASKTEASSVSSSSVSPA) form a disordered region. The segment covering 334–354 (ASTTASKTEASSVSSSSVSPA) has biased composition (low complexity).

This sequence belongs to the G-protein coupled receptor 1 family. Opsin subfamily. In terms of processing, phosphorylated on some or all of the serine and threonine residues present in the C-terminal region. Post-translationally, contains one covalently linked retinal chromophore. As to expression, retinal rod photoreceptor cells, predominantly in the outer segments (at protein level). Retinal rod photoreceptor cells.

It localises to the membrane. It is found in the cell projection. The protein localises to the cilium. The protein resides in the photoreceptor outer segment. In terms of biological role, photoreceptor required for image-forming vision at low light intensity. While most salt water fish species use retinal as chromophore, most freshwater fish use 3-dehydroretinal, or a mixture of retinal and 3-dehydroretinal. Light-induced isomerization of 11-cis to all-trans retinal triggers a conformational change that activates signaling via G-proteins. Subsequent receptor phosphorylation mediates displacement of the bound G-protein alpha subunit by arrestin and terminates signaling. This Danio rerio (Zebrafish) protein is Rhodopsin (rho).